The chain runs to 598 residues: NADH-quinone oxidoreductase subunit C/D (598 aa).

Residues 1 to 189 (MTDLTTSDST…DPFVLTKQKE (189 aa)) form an NADH dehydrogenase I subunit C region. The tract at residues 213–598 (DFMFLNLGPN…IDFVMSDVDR (386 aa)) is NADH dehydrogenase I subunit D.

In the N-terminal section; belongs to the complex I 30 kDa subunit family. It in the C-terminal section; belongs to the complex I 49 kDa subunit family. In terms of assembly, NDH-1 is composed of 13 different subunits. Subunits NuoB, CD, E, F, and G constitute the peripheral sector of the complex.

It is found in the cell inner membrane. It carries out the reaction a quinone + NADH + 5 H(+)(in) = a quinol + NAD(+) + 4 H(+)(out). Functionally, NDH-1 shuttles electrons from NADH, via FMN and iron-sulfur (Fe-S) centers, to quinones in the respiratory chain. The immediate electron acceptor for the enzyme in this species is believed to be ubiquinone. Couples the redox reaction to proton translocation (for every two electrons transferred, four hydrogen ions are translocated across the cytoplasmic membrane), and thus conserves the redox energy in a proton gradient. The sequence is that of NADH-quinone oxidoreductase subunit C/D from Yersinia enterocolitica serotype O:8 / biotype 1B (strain NCTC 13174 / 8081).